An 815-amino-acid chain; its full sequence is Lon protease 1 (815 aa).

A Lon N-terminal domain is found at 14-211 (IAILPLLGTV…KLNEVLTREL (198 aa)). 370-377 (GPPGVGKT) serves as a coordination point for ATP. The Lon proteolytic domain maps to 606–787 (TDRPGIVTGL…GQVIELALRA (182 aa)). Active-site residues include S693 and K736.

This sequence belongs to the peptidase S16 family. As to quaternary structure, homohexamer. Organized in a ring with a central cavity.

The protein localises to the cytoplasm. The enzyme catalyses Hydrolysis of proteins in presence of ATP.. Functionally, ATP-dependent serine protease that mediates the selective degradation of mutant and abnormal proteins as well as certain short-lived regulatory proteins. Required for cellular homeostasis and for survival from DNA damage and developmental changes induced by stress. Degrades polypeptides processively to yield small peptide fragments that are 5 to 10 amino acids long. Binds to DNA in a double-stranded, site-specific manner. The chain is Lon protease 1 from Herpetosiphon aurantiacus (strain ATCC 23779 / DSM 785 / 114-95).